A 198-amino-acid polypeptide reads, in one-letter code: Imidazoleglycerol-phosphate dehydratase (198 aa).

It belongs to the imidazoleglycerol-phosphate dehydratase family.

The protein localises to the cytoplasm. It carries out the reaction D-erythro-1-(imidazol-4-yl)glycerol 3-phosphate = 3-(imidazol-4-yl)-2-oxopropyl phosphate + H2O. Its pathway is amino-acid biosynthesis; L-histidine biosynthesis; L-histidine from 5-phospho-alpha-D-ribose 1-diphosphate: step 6/9. The chain is Imidazoleglycerol-phosphate dehydratase from Streptomyces griseus subsp. griseus (strain JCM 4626 / CBS 651.72 / NBRC 13350 / KCC S-0626 / ISP 5235).